A 360-amino-acid chain; its full sequence is MTTENQDALSEIASAATLADLEAIRVRTLGKSGTITALLKTLGAMTPDQRQAEGPKIHALREAVTAAIADRKASLEGAALEARLATETLDMSLPVSAGMQGSVHPVAQVMDELAEIFADLGFAVATGPEIEDDWHNFTALNIPETHPARAMHDTFYFPDREDGKKMLLRTHTSPVQIRTMMTEKPPIRIIAPGRTYRSDSDATHTPMFHQVEGLVIDRGIHMGHLKWTLETFVKAFFERDDIVLRLRPSFFPFTEPSAEVDVGFTWEKGRRVIGGDPAAGNGGWMEILGSGMVHPRVIANCGLDPDEWQGFAFGCGIDRLAMLKYGMDDLRAFFDGDLRWLRHYGFAALDVPTLSGGVGA.

Glutamate 255 is a Mg(2+) binding site.

It belongs to the class-II aminoacyl-tRNA synthetase family. Phe-tRNA synthetase alpha subunit type 1 subfamily. Tetramer of two alpha and two beta subunits. Requires Mg(2+) as cofactor.

It is found in the cytoplasm. It carries out the reaction tRNA(Phe) + L-phenylalanine + ATP = L-phenylalanyl-tRNA(Phe) + AMP + diphosphate + H(+). This chain is Phenylalanine--tRNA ligase alpha subunit, found in Rhizorhabdus wittichii (strain DSM 6014 / CCUG 31198 / JCM 15750 / NBRC 105917 / EY 4224 / RW1) (Sphingomonas wittichii).